An 88-amino-acid chain; its full sequence is Small ribosomal subunit protein uS15c (88 aa).

Belongs to the universal ribosomal protein uS15 family. In terms of assembly, part of the 30S ribosomal subunit.

The protein localises to the plastid. Its subcellular location is the chloroplast. The sequence is that of Small ribosomal subunit protein uS15c (rps15) from Aethionema cordifolium (Lebanon stonecress).